A 339-amino-acid chain; its full sequence is Undecaprenyl-phosphate 4-deoxy-4-formamido-L-arabinose transferase (339 aa).

A run of 2 helical transmembrane segments spans residues 235–255 and 269–289; these read LSLVGGGMALAGFLFALFLLV and LFVLFAVLFMFSGVQLLGMGL.

It belongs to the glycosyltransferase 2 family.

The protein resides in the cell inner membrane. The enzyme catalyses UDP-4-deoxy-4-formamido-beta-L-arabinose + di-trans,octa-cis-undecaprenyl phosphate = 4-deoxy-4-formamido-alpha-L-arabinopyranosyl di-trans,octa-cis-undecaprenyl phosphate + UDP. It functions in the pathway glycolipid biosynthesis; 4-amino-4-deoxy-alpha-L-arabinose undecaprenyl phosphate biosynthesis; 4-amino-4-deoxy-alpha-L-arabinose undecaprenyl phosphate from UDP-4-deoxy-4-formamido-beta-L-arabinose and undecaprenyl phosphate: step 1/2. The protein operates within bacterial outer membrane biogenesis; lipopolysaccharide biosynthesis. Catalyzes the transfer of 4-deoxy-4-formamido-L-arabinose from UDP to undecaprenyl phosphate. The modified arabinose is attached to lipid A and is required for resistance to polymyxin and cationic antimicrobial peptides. The sequence is that of Undecaprenyl-phosphate 4-deoxy-4-formamido-L-arabinose transferase from Pseudomonas aeruginosa (strain LESB58).